We begin with the raw amino-acid sequence, 306 residues long: Tryptophan 2,3-dioxygenase (306 aa).

The interval 1–33 (MQPPGDDAAPRCPFAGAHAPDAPHVPEAAGDDA) is disordered. Substrate contacts are provided by residues 75–79 (FIIQH), Tyr-137, and Arg-141. His-264 serves as a coordination point for heme. Thr-278 contacts substrate.

It belongs to the tryptophan 2,3-dioxygenase family. Homotetramer. Heme is required as a cofactor.

The catalysed reaction is L-tryptophan + O2 = N-formyl-L-kynurenine. It functions in the pathway amino-acid degradation; L-tryptophan degradation via kynurenine pathway; L-kynurenine from L-tryptophan: step 1/2. Its function is as follows. Heme-dependent dioxygenase that catalyzes the oxidative cleavage of the L-tryptophan (L-Trp) pyrrole ring and converts L-tryptophan to N-formyl-L-kynurenine. Catalyzes the oxidative cleavage of the indole moiety. The polypeptide is Tryptophan 2,3-dioxygenase (Burkholderia pseudomallei (strain 1106a)).